A 953-amino-acid chain; its full sequence is Nucleotide-binding oligomerization domain-containing protein 1 (953 aa).

Positions 15–105 constitute a CARD domain; sequence ESHPHIQLLK…AYVDLRPWLL (91 aa). Residues 196–531 enclose the NACHT domain; sequence ETIFILGDAG…AFFTAFFLVL (336 aa). Residue 202-209 coordinates ATP; it reads GDAGVGKS. Residues Cys558 and Cys567 are each lipidated (S-palmitoyl cysteine). LRR repeat units follow at residues 632-656, 702-725, 727-750, 755-778, 783-806, 839-862, 867-891, 895-918, and 923-946; these read LKSL…IWML, FPKR…ELQP, FSRL…VLSE, YKIV…YVTK, CKGL…YLAL, HPSL…SLAR, NTSL…LAEM, NQTL…QLAD, and NTGI…VYED. Residue Cys952 is the site of S-palmitoyl cysteine attachment.

This sequence belongs to the NOD1-NOD2 family. Homooligomer: homooligomerizes following ligand-binding, promoting RIPK2 recruitment. Interacts (via CARD domain) with RIPK2 (via CARD domain). Following RIPK2 recruitment, RIPK2 homooligomerizes via its CARD domain and forms long filaments named RIPosomes. Interacts with ARHGEF2. Interacts (via CARD domain) with ubiquitin; inhibiting interaction with RIPK2. Interacts with NLRP10 and recruits it to the cell membrane following invasive bacterial infection. Interacts with IFIH1; this interaction promotes transcription of antiviral genes and inhibition of viral replication. Interacts with IRGM; promoting NOD1 degradation. Interacts with ATG16L1. Palmitoylated. Palmitoylation is required for proper recruitment to the bacterial entry site and hence for proper signaling upon cognate peptidoglycan detection. Post-translationally, ubiquitinated. 'Lys-48'-linked polyubiquitination by RNF34 promotes proteasomal degradation and thereby negatively regulates NOD1 for instance in NF-kappa-B activation. In terms of processing, degraded via selective autophagy following interaction with IRGM. IRGM promotes NOD1-RIPK2 RIPosome recruitment to autophagosome membranes, promoting their SQSTM1/p62-dependent autophagic degradation. In terms of tissue distribution, highly expressed in adult heart, skeletal muscle, pancreas, spleen and ovary. Also detected in placenta, lung, liver, kidney, thymus, testis, small intestine and colon.

Its subcellular location is the cell membrane. It is found in the apical cell membrane. It localises to the basolateral cell membrane. The protein localises to the cytoplasm. Functionally, pattern recognition receptor (PRR) that detects bacterial peptidoglycan fragments and other danger signals and thus participates in both innate and adaptive immune responses. Specifically recognizes and binds gamma-D-glutamyl-meso-diaminopimelic acid (iE-DAP), a dipeptide present in peptidoglycan of Gram-negative bacteria. Preferentially binds iE-DAP in tripeptide-containing muropeptides (MurNAc-TriDAP or TriDAP). Ligand binding triggers oligomerization that facilitates the binding and subsequent activation of the proximal adapter receptor-interacting RIPK2. Following recruitment, RIPK2 undergoes 'Met-1'- (linear) and 'Lys-63'-linked polyubiquitination by E3 ubiquitin-protein ligases XIAP, BIRC2, BIRC3 and the LUBAC complex, becoming a scaffolding protein for downstream effectors, triggering activation of the NF-kappa-B and MAP kinases signaling. This in turn leads to the transcriptional activation of hundreds of genes involved in immune response. Also acts as a regulator of antiviral response elicited by dsRNA and the expression of RLR pathway members by targeting IFIH1 and TRAF3 to modulate the formation of IFIH1-MAVS and TRAF3-MAVS complexes leading to increased transcription of type I IFNs. Also acts as a regulator of autophagy via its interaction with ATG16L1, possibly by recruiting ATG16L1 at the site of bacterial entry. Besides recognizing pathogens, also involved in the endoplasmic reticulum stress response: acts by sensing and binding to the cytosolic metabolite sphingosine-1-phosphate generated in response to endoplasmic reticulum stress, initiating an inflammation process that leads to activation of the NF-kappa-B and MAP kinases signaling. In addition, plays a role in insulin trafficking in beta cells in a cell-autonomous manner. Mechanistically, upon recognizing cognate ligands, NOD1 and RIPK2 localize to insulin vesicles where they recruit RAB1A to direct insulin trafficking through the cytoplasm. Its function is as follows. In contrast to isoform 1, does not efficiently recognize and bind gamma-D-glutamyl-meso-diaminopimelic acid (iE-DAP) ligand. This is Nucleotide-binding oligomerization domain-containing protein 1 from Homo sapiens (Human).